The primary structure comprises 333 residues: Procathepsin L (333 aa).

Positions 1–17 (MNPTFILAALCLGIASA) are cleaved as a signal peptide. The propeptide at 18-113 (TLTFNHSLEA…KVFQEPLFYE (96 aa)) is activation peptide. Zn(2+) is bound at residue E122. Cystine bridges form between C135/C178 and C169/C211. C138 is a catalytic residue. Residues E163, D184, E199, E205, E209, D227, D250, H253, D273, and D275 each contribute to the Zn(2+) site. C269 and C322 are disulfide-bonded. Residue H276 is part of the active site. Positions 289–291 (ESD) are excised as a propeptide. Residue N300 is part of the active site.

It belongs to the peptidase C1 family. As to quaternary structure, dimer of a heavy and a light chain linked by disulfide bonds. Interacts with Long isoform of CD74/Ii chain; the interaction stabilizes the conformation of mature CTSL. In terms of processing, during export along the endocytic pathway, pro-CTSL undergoes several proteolytic cleavages to generate the CTSL single-chain and two-chain mature forms, composed of a heavy chain linked to a light chain by disulfide bonds. Autocleavage; produces the single-chain CTSL after cleavage of the propeptide. The cleavage can be intermolecular.

Its subcellular location is the lysosome. The protein resides in the apical cell membrane. The protein localises to the cytoplasmic vesicle. It is found in the secretory vesicle. It localises to the chromaffin granule. Its subcellular location is the secreted. The protein resides in the extracellular space. It catalyses the reaction Specificity close to that of papain. As compared to cathepsin B, cathepsin L exhibits higher activity toward protein substrates, but has little activity on Z-Arg-Arg-NHMec, and no peptidyl-dipeptidase activity.. Inhibited by the propeptide produced by autocleavage. Long isoform of CD74/Ii chain stabilizes the conformation of mature CTSL by binding to its active site and serving as a chaperone to help maintain a pool of mature enzyme in endocytic compartments and extracellular space of APCs. IFNG enhances the conversion into the CTSL mature and active form. Inhibited by CST6. Inhibited by the glycopeptide antibiotic teicoplanin. Inhibited by amantadine. Functionally, thiol protease important for the overall degradation of proteins in lysosomes. Plays a critical for normal cellular functions such as general protein turnover, antigen processing and bone remodeling. Involved in the solubilization of cross-linked TG/thyroglobulin and in the subsequent release of thyroid hormone thyroxine (T4) by limited proteolysis of TG/thyroglobulin in the thyroid follicle lumen. In neuroendocrine chromaffin cells secretory vesicles, catalyzes the prohormone proenkephalin processing to the active enkephalin peptide neurotransmitter. In thymus, regulates CD4(+) T cell positive selection by generating the major histocompatibility complex class II (MHCII) bound peptide ligands presented by cortical thymic epithelial cells. Also mediates invariant chain processing in cortical thymic epithelial cells. Major elastin-degrading enzyme at neutral pH. Accumulates as a mature and active enzyme in the extracellular space of antigen presenting cells (APCs) to regulate degradation of the extracellular matrix in the course of inflammation. Secreted form generates endostatin from COL18A1. Critical for cardiac morphology and function. Plays an important role in hair follicle morphogenesis and cycling, as well as epidermal differentiation. Required for maximal stimulation of steroidogenesis by TIMP1. This chain is Procathepsin L (CTSL), found in Chlorocebus aethiops (Green monkey).